The sequence spans 317 residues: Ribonuclease Z (317 aa).

The Zn(2+) site is built by H61, H63, D65, H66, H139, D210, and H268. D65 functions as the Proton acceptor in the catalytic mechanism.

Belongs to the RNase Z family. Homodimer. The cofactor is Zn(2+).

It carries out the reaction Endonucleolytic cleavage of RNA, removing extra 3' nucleotides from tRNA precursor, generating 3' termini of tRNAs. A 3'-hydroxy group is left at the tRNA terminus and a 5'-phosphoryl group is left at the trailer molecule.. Its activity is regulated as follows. Inhibited by high salt concentrations. In terms of biological role, zinc phosphodiesterase, which displays some tRNA 3'-processing endonuclease activity. Probably involved in tRNA maturation, by removing a 3'-trailer from precursor tRNA. Can also catalyze the 5' end cleavage of the 5S rRNA. This is Ribonuclease Z from Haloferax volcanii (strain ATCC 29605 / DSM 3757 / JCM 8879 / NBRC 14742 / NCIMB 2012 / VKM B-1768 / DS2) (Halobacterium volcanii).